Consider the following 101-residue polypeptide: Chaperone modulatory protein CbpM (101 aa).

Belongs to the CbpM family.

Interacts with CbpA and inhibits both the DnaJ-like co-chaperone activity and the DNA binding activity of CbpA. Together with CbpA, modulates the activity of the DnaK chaperone system. Does not inhibit the co-chaperone activity of DnaJ. The protein is Chaperone modulatory protein CbpM of Citrobacter koseri (strain ATCC BAA-895 / CDC 4225-83 / SGSC4696).